The sequence spans 563 residues: MAKYDFVMLWILTLTAAIAAARPMVVDKGRQITYTGLDRNGIEVFLGIPFGHDTGGKNRFKPPVAVVPPRGSHINATVYGPICPQELRAGSRGKLVISENCLNLNIGRPKNMTSHDKLAVMVTIYGGGYWVGHNQDPRWHADNMVKESVANGRPIIHVAMNYRLGVFGFAQTTALRTERSENAALRDQRLALEWVRDNIAAFGGDPKRVTIFGQSSGGVSVGMQMLAYGGKQPVPYQQGICQSQVLEPGITGNFTSTAMELVTDKANCTSGDFNSEAALACLRELDTETLLAAAIATYQNGVDHNIGDIWLPSVDGDFLPDAPSVLVAQRRFAPVTSMMGWCEDDVTRFVYPNITTSKGVADFIASYAPNVSRKNIDTLLKLYPTDEFPENKTAGLSRDFYRTARIFRDIVMTCEPFLVGEHAAAEGADAYFFSWNQTIAPSALGVLHGADLPYVYANLSAYIPPGSPIRPTASDYELSHRASRSWSTFGSTKEPSLPGHNTFKGFRKSFSKHNEILVFVAGGPNEGLSNIDDHGPHSVIGGQKLRERCAFINSPEMIHELRF.

An N-terminal signal peptide occupies residues 1–20 (MAKYDFVMLWILTLTAAIAA). Residues C83 and C101 are joined by a disulfide bond. The active-site Acyl-ester intermediate is S215. A disulfide bridge connects residues C268 and C281.

Belongs to the type-B carboxylesterase/lipase family.

Its subcellular location is the secreted. The catalysed reaction is a triacylglycerol + H2O = a diacylglycerol + a fatty acid + H(+). The protein is Secreted lipase ARB07186/07185 of Arthroderma benhamiae (strain ATCC MYA-4681 / CBS 112371) (Trichophyton mentagrophytes).